The chain runs to 231 residues: CLAVATA3/ESR (CLE)-related protein 4B-2 (231 aa).

Residues 1–21 (MATNTMLCLLILSVVLALAFA) form the signal peptide. A required for secretion from the host cytoplasm to the host apoplasm region spans residues 21 to 83 (ATNKKGDEEP…SNQLPNNNWM (63 aa)). An N-linked (GlcNAc...) asparagine glycan is attached at Asn-32. A disordered region spans residues 116-231 (RKTGMHSQRH…APAGPDPIHH (116 aa)). Composition is skewed to basic and acidic residues over residues 125 to 137 (HHEE…EKRV) and 144 to 221 (PIHH…EKRG). An A-1 repeat occupies 127 to 135 (EETTLEQEK). Residues 127–219 (EETTLEQEKR…HEETTFEQEK (93 aa)) form a 5 X approximate repeat A region. The CLE-1 repeat unit spans residues 136 to 147 (RVAGAGPDPIHH). Positions 136–231 (RVAGAGPDPI…APAGPDPIHH (96 aa)) are 5 X approximate repeat CLE. The A-2 repeat unit spans residues 148–156 (EETTLEQEK). A CLE-2 repeat occupies 157-168 (RAVPAGPDPKHH). The A-3 repeat unit spans residues 169-177 (EETTLEQEK). Residues 178-189 (RAVPAGPDPKHH) form a CLE-3 repeat. Residues 190–198 (EETTLEQEK) form an A-4 repeat. One copy of the CLE-4 repeat lies at 199-210 (RAVPAGPDPKHH). Residues 211–219 (EETTFEQEK) form an A-5 repeat. The stretch at 220 to 231 (RGAPAGPDPIHH) is one CLE-5 repeat.

It belongs to the CLV3/ESR signal peptide family. Highly expressed exclusively within the dorsal esophageal gland cell during syncytium formation in host plants.

The protein localises to the secreted. Its subcellular location is the host cytoplasm. It is found in the host extracellular space. It localises to the extracellular space. The protein resides in the apoplast. In terms of biological role, mimics host plant CLE extracellular signal peptides that regulate cell fate. May play a role in the differentiation or division of feeding cells (syncytia) induced in plant roots during infection. The protein is CLAVATA3/ESR (CLE)-related protein 4B-2 (CLE-4B-2) of Globodera rostochiensis (Golden nematode worm).